A 252-amino-acid polypeptide reads, in one-letter code: MRRTRSAVATGPREQRRSGATGGLSGGESRAQRSRSRTRAGAGGGGGAVGPQPSAKPRPKPPPRAQEAAAEEPPPAVTPAASVSALDLGEQRERWETFQKRQRLSFEGAAKLLLDTFEYQGLVKHTGGCHCGAVRFEVWASADLHIFDCNCSICKKKQNRHFIVPASRFKLLKGAESITTYTFNTHKAQHTFCKRCGVQSFYTPRSNPGGFGIAPHCLDEGTVRSVVTEEFNGSDWERAMKEHKTIKNMSKE.

The disordered stretch occupies residues Met-1 to Ala-80. Ser-18 carries the post-translational modification Phosphoserine. Omega-N-methylarginine is present on Arg-39. Over residues Ser-54–Arg-64 the composition is skewed to pro residues. Thr-78 carries the phosphothreonine modification. A CENP-V/GFA domain is found at His-125–Glu-237. Cys-129, Cys-131, Cys-149, Cys-151, Cys-154, Cys-193, and Cys-196 together coordinate Zn(2+). Ser-234 carries the phosphoserine modification.

This sequence belongs to the Gfa family. The cofactor is Zn(2+).

The protein localises to the chromosome. The protein resides in the centromere. Its subcellular location is the kinetochore. It localises to the nucleus. It is found in the cytoplasm. The protein localises to the cytoskeleton. The protein resides in the spindle. Required for distribution of pericentromeric heterochromatin in interphase nuclei and for centromere formation and organization, chromosome alignment and cytokinesis. The chain is Centromere protein V (Cenpv) from Mus musculus (Mouse).